Consider the following 474-residue polypeptide: tRNA-2-methylthio-N(6)-dimethylallyladenosine synthase (474 aa).

Residues 3-120 (KKLHIKTWGC…LPEMINSVRG (118 aa)) form the MTTase N-terminal domain. [4Fe-4S] cluster-binding residues include C12, C49, C83, C157, C161, and C164. Positions 143 to 375 (RAEGPTAFVS…QERINQQAMA (233 aa)) constitute a Radical SAM core domain. In terms of domain architecture, TRAM spans 378–441 (RRMLGTVQRI…TNSLRGKIVR (64 aa)).

This sequence belongs to the methylthiotransferase family. MiaB subfamily. As to quaternary structure, monomer. It depends on [4Fe-4S] cluster as a cofactor.

It is found in the cytoplasm. It catalyses the reaction N(6)-dimethylallyladenosine(37) in tRNA + (sulfur carrier)-SH + AH2 + 2 S-adenosyl-L-methionine = 2-methylsulfanyl-N(6)-dimethylallyladenosine(37) in tRNA + (sulfur carrier)-H + 5'-deoxyadenosine + L-methionine + A + S-adenosyl-L-homocysteine + 2 H(+). Functionally, catalyzes the methylthiolation of N6-(dimethylallyl)adenosine (i(6)A), leading to the formation of 2-methylthio-N6-(dimethylallyl)adenosine (ms(2)i(6)A) at position 37 in tRNAs that read codons beginning with uridine. This Klebsiella pneumoniae subsp. pneumoniae (strain ATCC 700721 / MGH 78578) protein is tRNA-2-methylthio-N(6)-dimethylallyladenosine synthase.